Here is a 147-residue protein sequence, read N- to C-terminus: Cyanate hydratase (147 aa).

Catalysis depends on residues R88, E91, and S114.

The protein belongs to the cyanase family.

It catalyses the reaction cyanate + hydrogencarbonate + 3 H(+) = NH4(+) + 2 CO2. Catalyzes the reaction of cyanate with bicarbonate to produce ammonia and carbon dioxide. This is Cyanate hydratase from Thiobacillus denitrificans (strain ATCC 25259 / T1).